The sequence spans 141 residues: Large ribosomal subunit protein uL16c (141 aa).

Residues 1 to 17 show a composition bias toward basic residues; the sequence is MLSPKRTKYRKPHRGNR. Residues 1–21 form a disordered region; that stretch reads MLSPKRTKYRKPHRGNRKGQA.

It belongs to the universal ribosomal protein uL16 family. As to quaternary structure, part of the 50S ribosomal subunit.

The protein localises to the plastid. It is found in the chloroplast. This is Large ribosomal subunit protein uL16c from Ostreococcus tauri.